We begin with the raw amino-acid sequence, 302 residues long: Protein FdhE homolog (302 aa).

This sequence belongs to the FdhE family.

The protein localises to the cytoplasm. Necessary for formate dehydrogenase activity. The polypeptide is Protein FdhE homolog (Haemophilus influenzae (strain PittGG)).